The chain runs to 185 residues: Shikimate kinase (185 aa).

12-17 lines the ATP pocket; it reads GSGKTT. Mg(2+) is bound at residue Thr16. Substrate-binding residues include Asp34, Arg58, and Gly79. Arg116 is an ATP binding site. Arg135 is a binding site for substrate.

Belongs to the shikimate kinase family. Monomer. Requires Mg(2+) as cofactor.

The protein resides in the cytoplasm. It catalyses the reaction shikimate + ATP = 3-phosphoshikimate + ADP + H(+). It participates in metabolic intermediate biosynthesis; chorismate biosynthesis; chorismate from D-erythrose 4-phosphate and phosphoenolpyruvate: step 5/7. Its function is as follows. Catalyzes the specific phosphorylation of the 3-hydroxyl group of shikimic acid using ATP as a cosubstrate. The sequence is that of Shikimate kinase from Corynebacterium jeikeium (strain K411).